We begin with the raw amino-acid sequence, 623 residues long: Serine/threonine-protein kinase nrc-2 (623 aa).

A disordered region spans residues 1-215 (MPSTKNANGE…GLGALPPPIR (215 aa)). 2 stretches are compositionally biased toward basic and acidic residues: residues 27-36 (SKDHKDRDAH) and 170-180 (LSKEPLEESKD). The span at 199–209 (LAAPDADGLGA) shows a compositional bias: low complexity. The Protein kinase domain maps to 242-532 (FDKIKLIGKG…ASDIKTHPFF (291 aa)). ATP-binding positions include 248 to 256 (IGKGDVGKV) and Lys-271. Asp-367 (proton acceptor) is an active-site residue. Residues 569–596 (VDISGSRQMGLKGEPLESGMVTPGENAV) are disordered.

It belongs to the protein kinase superfamily. Ser/Thr protein kinase family. KIN82 subfamily.

The enzyme catalyses L-seryl-[protein] + ATP = O-phospho-L-seryl-[protein] + ADP + H(+). The catalysed reaction is L-threonyl-[protein] + ATP = O-phospho-L-threonyl-[protein] + ADP + H(+). Controls entry of the cell into the asexual developmental program. Required to repress entry into the conidiation program. This Neurospora crassa (strain ATCC 24698 / 74-OR23-1A / CBS 708.71 / DSM 1257 / FGSC 987) protein is Serine/threonine-protein kinase nrc-2 (nrc-2).